A 94-amino-acid chain; its full sequence is MRIKPLGNRVVIKKLEAEEKTKSGIVLTGSAKEVPQEAEVVAVGPGSIVDGTKIEMEVKVGDKVLYSKYSGTEVKLDGEEYMILKQDDILAIVE.

It belongs to the GroES chaperonin family. Heptamer of 7 subunits arranged in a ring. Interacts with the chaperonin GroEL.

Its subcellular location is the cytoplasm. In terms of biological role, together with the chaperonin GroEL, plays an essential role in assisting protein folding. The GroEL-GroES system forms a nano-cage that allows encapsulation of the non-native substrate proteins and provides a physical environment optimized to promote and accelerate protein folding. GroES binds to the apical surface of the GroEL ring, thereby capping the opening of the GroEL channel. This chain is Co-chaperonin GroES, found in Clostridium botulinum (strain Eklund 17B / Type B).